Consider the following 408-residue polypeptide: Energy-coupling factor transporter ATP-binding protein EcfA1 (408 aa).

Positions 140–374 (IEINHLSFKY…KDFLRNIQLD (235 aa)) constitute an ABC transporter domain. 174 to 181 (GHNGSGKS) serves as a coordination point for ATP.

It belongs to the ABC transporter superfamily. Energy-coupling factor EcfA family. Forms a stable energy-coupling factor (ECF) transporter complex composed of 2 membrane-embedded substrate-binding proteins (S component), 2 ATP-binding proteins (A component) and 2 transmembrane proteins (T component).

The protein resides in the cell membrane. Its function is as follows. ATP-binding (A) component of a common energy-coupling factor (ECF) ABC-transporter complex. Unlike classic ABC transporters this ECF transporter provides the energy necessary to transport a number of different substrates. This chain is Energy-coupling factor transporter ATP-binding protein EcfA1, found in Mycoplasma mycoides subsp. mycoides SC (strain CCUG 32753 / NCTC 10114 / PG1).